A 392-amino-acid polypeptide reads, in one-letter code: Pannexin-3 (392 aa).

The Cytoplasmic portion of the chain corresponds to methionine 1–lysine 39. The chain crosses the membrane as a helical span at residues phenylalanine 40 to serine 60. At glycine 61 to serine 113 the chain is on the extracellular side. An N-linked (GlcNAc...) asparagine glycan is attached at asparagine 71. Residues leucine 114–proline 134 traverse the membrane as a helical segment. Over alanine 135–leucine 215 the chain is Cytoplasmic. A helical membrane pass occupies residues leucine 216–phenylalanine 236. Residues glutamine 237–serine 267 lie on the Extracellular side of the membrane. The helical transmembrane segment at isoleucine 268–isoleucine 288 threads the bilayer. Topologically, residues tyrosine 289–proline 392 are cytoplasmic.

The protein belongs to the pannexin family. As to quaternary structure, homoheptameric.

It is found in the cell membrane. It localises to the cell junction. The protein localises to the gap junction. The protein resides in the endoplasmic reticulum membrane. It catalyses the reaction Ca(2+)(in) = Ca(2+)(out). The catalysed reaction is ATP(in) = ATP(out). Regulator of osteoblast differentiation by functionning as a Ca(2+) channel in the endoplasmic reticulum which regulates calmodulin (CaM) pathways. Allows ATP release into the extracellular space and activation or purinergic receptors. This chain is Pannexin-3, found in Homo sapiens (Human).